The primary structure comprises 369 residues: Ferredoxin--NADP reductase 2 (369 aa).

The interval 1-21 (MDLSIPNPVADATRQVEGGSP) is disordered. Residues Asp-58, Gln-66, Tyr-71, Val-111, Phe-146, Asp-311, and Thr-352 each contribute to the FAD site.

It belongs to the ferredoxin--NADP reductase type 2 family. In terms of assembly, homodimer. FAD is required as a cofactor.

It carries out the reaction 2 reduced [2Fe-2S]-[ferredoxin] + NADP(+) + H(+) = 2 oxidized [2Fe-2S]-[ferredoxin] + NADPH. The polypeptide is Ferredoxin--NADP reductase 2 (Cupriavidus taiwanensis (strain DSM 17343 / BCRC 17206 / CCUG 44338 / CIP 107171 / LMG 19424 / R1) (Ralstonia taiwanensis (strain LMG 19424))).